We begin with the raw amino-acid sequence, 467 residues long: DNA methyltransferase 1-associated protein 1 (467 aa).

Basic and acidic residues-rich tracts occupy residues 1–11 and 26–48; these read MATGADVRDIL and SKKDIINPDKKKSKKSSETLTFK. The interval 1 to 48 is disordered; it reads MATGADVRDILELGGPEGDAASGTISKKDIINPDKKKSKKSSETLTFK. Residue K27 forms a Glycyl lysine isopeptide (Lys-Gly) (interchain with G-Cter in SUMO2) linkage. The SANT domain occupies 149–199; the sequence is DDAWTKAETDHLFDLSRRFDLRFVVIHDRYDHQQFKKRSVEDLKERYYHIC. K214 participates in a covalent cross-link: Glycyl lysine isopeptide (Lys-Gly) (interchain with G-Cter in SUMO2). Residues 225 to 275 adopt a coiled-coil conformation; sequence RRKEQLERLYNRTPEQVAEEEYLLQELRKIEARKKEREKRSQDLQKLITAA. Over residues 258-267 the composition is skewed to basic and acidic residues; sequence KKEREKRSQD. 2 disordered regions span residues 258 to 305 and 404 to 467; these read KKER…PAVP and LGGP…AKKP. The segment covering 406-422 has biased composition (low complexity); that stretch reads GPATPASGPGPASAEPA. Residue T445 is modified to Phosphothreonine. S448 carries the post-translational modification Phosphoserine.

In terms of assembly, component of the NuA4 histone acetyltransferase complex which contains the catalytic subunit KAT5/TIP60 and the subunits EP400, TRRAP/PAF400, BRD8/SMAP, EPC1, DMAP1/DNMAP1, RUVBL1/TIP49, RUVBL2, ING3, actin, ACTL6A/BAF53A, MORF4L1/MRG15, MORF4L2/MRGX, MRGBP, YEATS4/GAS41, VPS72/YL1 and MEAF6. Component of a NuA4-related complex which contains EP400, TRRAP/PAF400, SRCAP, BRD8/SMAP, EPC1, DMAP1/DNMAP1, RUVBL1/TIP49, RUVBL2, actin, ACTL6A/BAF53A, VPS72 and YEATS4/GAS41. DMAP1 also forms a complex with DNMT1 and HDAC2. Throughout S phase it interacts directly with the N-terminus of DNMT1, which serves to recruit DMAP1 to replication foci. DMAP1 interacts with ING1, a component of the mSin3A transcription repressor complex, although this interaction is not required for recruitment of ING1 to heterochromatin. Interacts directly with the transcriptional corepressor TSG101. Interacts with the pro-apoptotic protein DAXX. Interacts with URI1.

It localises to the nucleus. Its subcellular location is the cytoplasm. Involved in transcription repression and activation. Its interaction with HDAC2 may provide a mechanism for histone deacetylation in heterochromatin following replication of DNA at late firing origins. Can also repress transcription independently of histone deacetylase activity. May specifically potentiate DAXX-mediated repression of glucocorticoid receptor-dependent transcription. Component of the NuA4 histone acetyltransferase (HAT) complex which is involved in transcriptional activation of select genes principally by acetylation of nucleosomal histones H4 and H2A. This modification may both alter nucleosome - DNA interactions and promote interaction of the modified histones with other proteins which positively regulate transcription. This complex may be required for the activation of transcriptional programs associated with oncogene and proto-oncogene mediated growth induction, tumor suppressor mediated growth arrest and replicative senescence, apoptosis, and DNA repair. NuA4 may also play a direct role in DNA repair when recruited to sites of DNA damage. Participates in the nuclear localization of URI1 and increases its transcriptional corepressor activity. The polypeptide is DNA methyltransferase 1-associated protein 1 (DMAP1) (Homo sapiens (Human)).